Reading from the N-terminus, the 473-residue chain is ATP synthase subunit beta (473 aa).

158–165 provides a ligand contact to ATP; the sequence is GGAGVGKT.

This sequence belongs to the ATPase alpha/beta chains family. As to quaternary structure, F-type ATPases have 2 components, CF(1) - the catalytic core - and CF(0) - the membrane proton channel. CF(1) has five subunits: alpha(3), beta(3), gamma(1), delta(1), epsilon(1). CF(0) has three main subunits: a(1), b(2) and c(9-12). The alpha and beta chains form an alternating ring which encloses part of the gamma chain. CF(1) is attached to CF(0) by a central stalk formed by the gamma and epsilon chains, while a peripheral stalk is formed by the delta and b chains.

The protein localises to the cell membrane. It carries out the reaction ATP + H2O + 4 H(+)(in) = ADP + phosphate + 5 H(+)(out). Produces ATP from ADP in the presence of a proton gradient across the membrane. The catalytic sites are hosted primarily by the beta subunits. This chain is ATP synthase subunit beta, found in Anoxybacillus flavithermus (strain DSM 21510 / WK1).